A 262-amino-acid polypeptide reads, in one-letter code: Methionine-rich nacre protein (262 aa).

A signal peptide spans 1-22 (MSIMRRILCLAVVIFIINDVSS). A compositionally biased stretch (low complexity) spans 26–35 (GNNKNWKKNG). The segment at 26–84 (GNNKNWKKNGMSLSSPGNKKPTGNNAVPQKSKMNNMNQNSLSQPKRSSPPGNSMYNMAN) is disordered. Polar residues predominate over residues 36-84 (MSLSSPGNKKPTGNNAVPQKSKMNNMNQNSLSQPKRSSPPGNSMYNMAN).

In terms of tissue distribution, expressed in mantle and, after secretion, incorporated into acid-insoluble nacre matrix of the shell (at protein level). Expressed primarily in the mantle with highest level in the mantle pallium and lower level in the mantle edge.

The protein resides in the secreted. This Pinctada maxima (Silver-lipped pearl oyster) protein is Methionine-rich nacre protein.